Consider the following 447-residue polypeptide: MKPVIALVGRPNVGKSTLFNRLTKSRDAIVADFAGLTRDRHYGNGRQGKHEYIVIDTGGFEPDASSGIYREMARQTQQAVAEADVVVFVVDVRGGLSAQDHDIANYLRRLGKPCVLAGNKAEGMQDSMHLAEFYELGLGEVHPVSAAHGQGVRSLVDLALKPLALPEIEEEDAAAEKNVIRLAVAGRPNVGKSTLINTWLGEERLVAFDMPGTTRDAISVPFERNGQKFELIDTAGLRRKGKVFEAIEKFSVVKTLQAIESANVVLLLLDATQGVTDQDAHIAGYILESGRAVVIAVNKWDAVDDYGRQQLERSIETCLSFLKFAPLHFISAKKRQGIGPLWSSIIQAYKSANRKMPTPVLTRLLQEAVQFQSPKRSGMFRPKMRYAHQGGMNPPVIVIHGNSLEHVTDAYKRFLEARFRKEFDLVGTPLRIEMKTSSNPYTDKQNS.

EngA-type G domains lie at 3–167 and 180–353; these read PVIA…ALPE and IRLA…KSAN. GTP is bound by residues 9–16, 56–60, 119–122, 186–193, 233–237, and 298–301; these read GRPNVGKS, DTGGF, NKAE, DTAGL, and NKWD. One can recognise a KH-like domain in the interval 354–438; the sequence is RKMPTPVLTR…PLRIEMKTSS (85 aa).

The protein belongs to the TRAFAC class TrmE-Era-EngA-EngB-Septin-like GTPase superfamily. EngA (Der) GTPase family. In terms of assembly, associates with the 50S ribosomal subunit.

Its function is as follows. GTPase that plays an essential role in the late steps of ribosome biogenesis. The protein is GTPase Der of Acidovorax sp. (strain JS42).